Reading from the N-terminus, the 498-residue chain is E3 ubiquitin-protein ligase TRIM22 (498 aa).

The RING-type zinc-finger motif lies at 15–60 (CPICLELLTEPLSLDCGHSFCQACITAKIKESVIISRGESSCPVCQ). The B box-type zinc-finger motif lies at 92–133 (QKRDVCEHHGKKLQIFCKEDGKVICWVCELSQEHQGHQTFRI). Cys-97, His-100, Cys-119, and His-125 together coordinate Zn(2+). A coiled-coil region spans residues 132 to 248 (RINEVVKECQ…RRLRGSSVEM (117 aa)). Positions 257–275 (KRSESWTLKKPKSVSKKLK) match the Nuclear localization signal motif. The B30.2/SPRY domain maps to 283-498 (LSGMLQVLKE…VPMTVCPPSS (216 aa)).

This sequence belongs to the TRIM/RBCC family. Homotrimer. As to quaternary structure, (Microbial infection) Interacts with HIV-1 Gag polyprotein; this interaction seems to reduce gag production or virus budding. In terms of assembly, (Microbial infection) Interacts with EMCV protease 3C; this interaction leads to viral protease ubiquitination. Post-translationally, auto-ubiquitinated. Strongly expressed in peripheral blood leukocytes, spleen, thymus, and ovary. Expressed at basal levels in other tissues.

The protein localises to the cytoplasm. It localises to the nucleus. Its subcellular location is the nucleus speckle. It is found in the cajal body. The catalysed reaction is S-ubiquitinyl-[E2 ubiquitin-conjugating enzyme]-L-cysteine + [acceptor protein]-L-lysine = [E2 ubiquitin-conjugating enzyme]-L-cysteine + N(6)-ubiquitinyl-[acceptor protein]-L-lysine.. The protein operates within protein modification; protein ubiquitination. Interferon-induced E3 ubiquitin ligase that plays important roles in innate and adaptive immunity. Restricts the replication of many viruses including HIV-1, encephalomyocarditis virus (EMCV), hepatitis B virus (HBV), hepatitis C virus (HCV) or Zika virus (ZIKV). Mechanistically, negatively regulates HCV replication by promoting ubiquitination and subsequent degradation of viral NS5A. Also acts by promoting the degradation of Zika virus NS1 and NS3 proteins through proteasomal degradation. Acts as a suppressor of basal HIV-1 LTR-driven transcription by preventing Sp1 binding to the HIV-1 promoter. Also plays a role in antiviral immunity by co-regulating together with NT5C2 the RIGI/NF-kappa-B pathway by promoting 'Lys-63'-linked ubiquitination of RIGI, while NT5C2 is responsible for 'Lys-48'-linked ubiquitination of RIGI. Participates in adaptive immunity by suppressing the amount of MHC class II protein in a negative feedback manner in order to limit the extent of MHC class II induction. The polypeptide is E3 ubiquitin-protein ligase TRIM22 (TRIM22) (Homo sapiens (Human)).